We begin with the raw amino-acid sequence, 476 residues long: Serine protease HTRA1B (476 aa).

The first 19 residues, Met-1 to Ala-19, serve as a signal peptide directing secretion. In terms of domain architecture, IGFBP N-terminal spans Tyr-25–Lys-109. Cystine bridges form between Cys-29–Cys-54, Cys-33–Cys-56, Cys-38–Cys-57, Cys-45–Cys-60, Cys-68–Cys-85, and Cys-79–Cys-106. The 60-residue stretch at Thr-94–Lys-153 folds into the Kazal-like domain. The serine protease stretch occupies residues Gly-200–Leu-360. Catalysis depends on charge relay system residues His-216, Asp-246, and Ser-324. The PDZ domain occupies Ala-361–Glu-463.

This sequence belongs to the peptidase S1C family. In terms of assembly, forms homotrimers. In the presence of substrate, may form higher-order multimers in a PDZ-independent manner.

It localises to the secreted. The protein localises to the cytoplasm. Its subcellular location is the cytosol. In terms of biological role, serine protease with a variety of targets, including extracellular matrix proteins and proteoglycans. Through cleavage of proteoglycans, may release soluble FGF-glycosaminoglycan complexes that promote the range and intensity of FGF signals in the extracellular space. Regulates the availability of insulin-like growth factors (IGFs) by cleaving IGF-binding proteins. Inhibits signaling mediated by TGF-beta family members. Consequently, may regulate many physiological processes. Intracellularly, degrades TSC2, leading to the activation of TSC2 downstream targets. In Danio rerio (Zebrafish), this protein is Serine protease HTRA1B (htra1b).